The following is a 496-amino-acid chain: Glutamate--tRNA ligase (496 aa).

The 'HIGH' region motif lies at 12–22 (PSPTGHLHIGN). The short motif at 259 to 263 (KLSKR) is the 'KMSKS' region element. Lys262 serves as a coordination point for ATP.

This sequence belongs to the class-I aminoacyl-tRNA synthetase family. Glutamate--tRNA ligase type 1 subfamily. Monomer.

The protein resides in the cytoplasm. The catalysed reaction is tRNA(Glu) + L-glutamate + ATP = L-glutamyl-tRNA(Glu) + AMP + diphosphate. Catalyzes the attachment of glutamate to tRNA(Glu) in a two-step reaction: glutamate is first activated by ATP to form Glu-AMP and then transferred to the acceptor end of tRNA(Glu). This is Glutamate--tRNA ligase from Lactiplantibacillus plantarum (strain ATCC BAA-793 / NCIMB 8826 / WCFS1) (Lactobacillus plantarum).